The primary structure comprises 211 residues: MTIPLTLKQRATGAQPRAMRREGRIPAVLYGHRGTQSLALELEQRTAEDLLKRVTINNTILPLKVERGWSGDVLLREVQHDAVGGKLLHLSFFAVAGHGSITLDLPLVFTGEAVGVKMDGGLLEKVLTQLTVNTPPTDVPEAIEVDISTMQVGDMLYVKDLVLPPGIEVVNTPDLVVAHLTPSPTGRALQSMDAAESAVEQPGEQPATAAG.

The disordered stretch occupies residues 186 to 211; that stretch reads GRALQSMDAAESAVEQPGEQPATAAG.

This sequence belongs to the bacterial ribosomal protein bL25 family. CTC subfamily. In terms of assembly, part of the 50S ribosomal subunit; part of the 5S rRNA/L5/L18/L25 subcomplex. Contacts the 5S rRNA. Binds to the 5S rRNA independently of L5 and L18.

Functionally, this is one of the proteins that binds to the 5S RNA in the ribosome where it forms part of the central protuberance. The protein is Large ribosomal subunit protein bL25 of Gloeobacter violaceus (strain ATCC 29082 / PCC 7421).